A 484-amino-acid chain; its full sequence is Dynein regulatory complex subunit 2 (484 aa).

Coiled-coil stretches lie at residues 92–160 (VDCK…RKTI) and 374–403 (KEQEGIEENNLEELTEELAKVMVDYTGMEN).

This sequence belongs to the DRC2 family. Component of the nexin-dynein regulatory complex (N-DRC). Interacts with DRC1.

The protein localises to the cytoplasm. The protein resides in the cytoskeleton. Its subcellular location is the flagellum basal body. It is found in the cell projection. It localises to the cilium. The protein localises to the flagellum. The protein resides in the flagellum axoneme. Component of the nexin-dynein regulatory complex (N-DRC), a key regulator of ciliary/flagellar motility which maintains the alignment and integrity of the distal axoneme and regulates microtubule sliding in motile axonemes. Plays a critical role in the assembly of N-DRC and also stabilizes the assembly of multiple inner dynein arms and radial spokes. Coassembles with DRC1 to form a central scaffold needed for assembly of the N-DRC and its attachment to the outer doublet microtubules. This Macaca fascicularis (Crab-eating macaque) protein is Dynein regulatory complex subunit 2 (CCDC65).